Reading from the N-terminus, the 445-residue chain is Trigger factor (445 aa).

The PPIase FKBP-type domain maps to 172–257 (GDQVVIDFVG…VKSVNWAHMP (86 aa)).

It belongs to the FKBP-type PPIase family. Tig subfamily.

It is found in the cytoplasm. The enzyme catalyses [protein]-peptidylproline (omega=180) = [protein]-peptidylproline (omega=0). Functionally, involved in protein export. Acts as a chaperone by maintaining the newly synthesized protein in an open conformation. Functions as a peptidyl-prolyl cis-trans isomerase. The polypeptide is Trigger factor (Polynucleobacter asymbioticus (strain DSM 18221 / CIP 109841 / QLW-P1DMWA-1) (Polynucleobacter necessarius subsp. asymbioticus)).